The sequence spans 196 residues: Elongation factor Ts (196 aa).

The segment at 80-83 is involved in Mg(2+) ion dislocation from EF-Tu; that stretch reads TDFV.

Belongs to the EF-Ts family.

The protein resides in the cytoplasm. Functionally, associates with the EF-Tu.GDP complex and induces the exchange of GDP to GTP. It remains bound to the aminoacyl-tRNA.EF-Tu.GTP complex up to the GTP hydrolysis stage on the ribosome. The sequence is that of Elongation factor Ts from Desulfotalea psychrophila (strain LSv54 / DSM 12343).